Consider the following 426-residue polypeptide: 3-phosphoshikimate 1-carboxyvinyltransferase (426 aa).

3 residues coordinate 3-phosphoshikimate: K22, S23, and R27. Phosphoenolpyruvate is bound at residue K22. Phosphoenolpyruvate-binding residues include G96 and R124. 3-phosphoshikimate is bound by residues S170 and S171. Q172 is a phosphoenolpyruvate binding site. The 3-phosphoshikimate site is built by S198, D314, N337, and K341. The active-site Proton acceptor is D314. Phosphoenolpyruvate contacts are provided by R345, R387, and K412.

This sequence belongs to the EPSP synthase family. In terms of assembly, homotetramer.

It is found in the cytoplasm. The enzyme catalyses 3-phosphoshikimate + phosphoenolpyruvate = 5-O-(1-carboxyvinyl)-3-phosphoshikimate + phosphate. The protein operates within metabolic intermediate biosynthesis; chorismate biosynthesis; chorismate from D-erythrose 4-phosphate and phosphoenolpyruvate: step 6/7. Its function is as follows. Catalyzes the transfer of the enolpyruvyl moiety of phosphoenolpyruvate (PEP) to the 5-hydroxyl of shikimate-3-phosphate (S3P) to produce enolpyruvyl shikimate-3-phosphate and inorganic phosphate. This Vibrio cholerae serotype O1 (strain ATCC 39315 / El Tor Inaba N16961) protein is 3-phosphoshikimate 1-carboxyvinyltransferase.